Reading from the N-terminus, the 367-residue chain is bZIP transcription factor 18 (367 aa).

Residues 1–57 (MEDPSNPQPNQSNLSQCPPLATAPTPAPVRGPYHRRAHSEVQFRLPEDLDLSEPFGG) form a disordered region. Positions 38–47 (HSEVQFRLPE) are enriched in basic and acidic residues. The residue at position 70 (Ser70) is a Phosphoserine. The segment at 79 to 124 (SGSGSASDSAGPSAPRSDNPFSAENGGAEAGNSRPRHRHSLSVDGS) is disordered. Over residues 82-96 (GSASDSAGPSAPRSD) the composition is skewed to low complexity. Residues 148-211 (DPKRAKRIIA…TGLSSENTEL (64 aa)) enclose the bZIP domain. Residues 150-171 (KRAKRIIANRQSAARSKERKAR) are basic motif. Residues 166–245 (KERKARYILE…VERLKFATGE (80 aa)) adopt a coiled-coil conformation. The interval 176–190 (LERKVQTLQTEATTL) is leucine-zipper. Polar residues-rich tracts occupy residues 294 to 309 (QPNN…NPPT), 317 to 328 (ATSNAPAQSHSY), and 354 to 367 (FGRS…SSTM). Disordered regions lie at residues 294 to 330 (QPNN…SYSE) and 343 to 367 (LDIS…SSTM).

Interacts with NEAP1. Forms homodimer and heterodimer with bZIP34 and bZIP61. Ubiquitous. Strongly expressed in mature pollen.

It is found in the nucleus. The protein localises to the nucleoplasm. Its subcellular location is the cytoplasm. The protein resides in the perinuclear region. Its function is as follows. Transcription factor that may participate with bZIP34 in the gametophytic control of pollen development. The polypeptide is bZIP transcription factor 18 (Arabidopsis thaliana (Mouse-ear cress)).